Here is a 380-residue protein sequence, read N- to C-terminus: 3-dehydroquinate synthase (380 aa).

NAD(+) is bound by residues 118 to 122 (GVIGD), 142 to 143 (TS), Lys155, and Lys164. 3 residues coordinate Zn(2+): Glu197, His259, and His278.

The protein belongs to the sugar phosphate cyclases superfamily. Dehydroquinate synthase family. Requires Co(2+) as cofactor. It depends on Zn(2+) as a cofactor. NAD(+) is required as a cofactor.

It localises to the cytoplasm. The enzyme catalyses 7-phospho-2-dehydro-3-deoxy-D-arabino-heptonate = 3-dehydroquinate + phosphate. The protein operates within metabolic intermediate biosynthesis; chorismate biosynthesis; chorismate from D-erythrose 4-phosphate and phosphoenolpyruvate: step 2/7. In terms of biological role, catalyzes the conversion of 3-deoxy-D-arabino-heptulosonate 7-phosphate (DAHP) to dehydroquinate (DHQ). This Sinorhizobium medicae (strain WSM419) (Ensifer medicae) protein is 3-dehydroquinate synthase.